The chain runs to 35 residues: Water stress-responsive protein 7 (35 aa).

This is Water stress-responsive protein 7 from Pinus pinaster (Maritime pine).